Here is a 117-residue protein sequence, read N- to C-terminus: Immunoglobulin heavy variable 3-48 (117 aa).

Residues 1 to 19 (MELGLCWVFLVAILEGVQC) form the signal peptide. Positions 20 to 44 (EVQLVESGGGLVQPGGSLRLSCAAS) are framework-1. The Ig-like domain maps to 20 to 117 (EVQLVESGGG…EDTAVYYCAR (98 aa)). A disulfide bond links C41 and C115. Residues 45-52 (GFTFSSYE) are complementarity-determining-1. A framework-2 region spans residues 53 to 69 (MNWVRQAPGKGLEWVSY). Residues 70-77 (ISSSGSTI) are complementarity-determining-2. Positions 78 to 115 (YYADSVKGRFTISRDNAKNSLYLQMNSLRAEDTAVYYC) are framework-3. Residues 116 to 117 (AR) are complementarity-determining-3.

As to quaternary structure, immunoglobulins are composed of two identical heavy chains and two identical light chains; disulfide-linked. Post-translationally, the N-terminus is blocked.

The protein resides in the secreted. It localises to the cell membrane. In terms of biological role, v region of the variable domain of immunoglobulin heavy chains that participates in the antigen recognition. Immunoglobulins, also known as antibodies, are membrane-bound or secreted glycoproteins produced by B lymphocytes. In the recognition phase of humoral immunity, the membrane-bound immunoglobulins serve as receptors which, upon binding of a specific antigen, trigger the clonal expansion and differentiation of B lymphocytes into immunoglobulins-secreting plasma cells. Secreted immunoglobulins mediate the effector phase of humoral immunity, which results in the elimination of bound antigens. The antigen binding site is formed by the variable domain of one heavy chain, together with that of its associated light chain. Thus, each immunoglobulin has two antigen binding sites with remarkable affinity for a particular antigen. The variable domains are assembled by a process called V-(D)-J rearrangement and can then be subjected to somatic hypermutations which, after exposure to antigen and selection, allow affinity maturation for a particular antigen. The protein is Immunoglobulin heavy variable 3-48 of Homo sapiens (Human).